The primary structure comprises 436 residues: Trigger factor (436 aa).

Residues glycine 161–proline 246 form the PPIase FKBP-type domain.

This sequence belongs to the FKBP-type PPIase family. Tig subfamily.

Its subcellular location is the cytoplasm. The enzyme catalyses [protein]-peptidylproline (omega=180) = [protein]-peptidylproline (omega=0). Functionally, involved in protein export. Acts as a chaperone by maintaining the newly synthesized protein in an open conformation. Functions as a peptidyl-prolyl cis-trans isomerase. In Ectopseudomonas mendocina (strain ymp) (Pseudomonas mendocina), this protein is Trigger factor.